We begin with the raw amino-acid sequence, 156 residues long: Small ribosomal subunit protein uS7 (156 aa).

This sequence belongs to the universal ribosomal protein uS7 family. Part of the 30S ribosomal subunit. Contacts proteins S9 and S11.

One of the primary rRNA binding proteins, it binds directly to 16S rRNA where it nucleates assembly of the head domain of the 30S subunit. Is located at the subunit interface close to the decoding center, probably blocks exit of the E-site tRNA. This chain is Small ribosomal subunit protein uS7, found in Renibacterium salmoninarum (strain ATCC 33209 / DSM 20767 / JCM 11484 / NBRC 15589 / NCIMB 2235).